A 407-amino-acid polypeptide reads, in one-letter code: MRWVWALLKNASLAGAPKYIEHFSKFSPSPLSMKQFLDFGSSNACEKTSFTFLRQELPVRLANIMKEINLLPDRVLSTPSVQLVQSWYVQSLLDIMEFLDKDPEDHRTLSQFTDALVTIRNRHNDVVPTMAQGVLEYKDTYGDDPVSNQNIQYFLDRFYLSRISIRMLINQHTLIFDGSTNPAHPKHIGSIDPNCNVSEVVKDAYDMAKLLCDKYYMASPDLEIQEINAANSKQPIHMVYVPSHLYHMLFELFKNAMRATVESHESSLILPPIKVMVALGEEDLSIKMSDRGGGVPLRKIERLFSYMYSTAPTPQPGTGGTPLAGFGYGLPISRLYAKYFQGDLQLFSMEGFGTDAVIYLKALSTDSVERLPVYNKSAWRHYQTIQEAGDWCVPSTEPKNTSTYRVS.

The Histidine kinase domain maps to 135–364 (LEYKDTYGDD…DAVIYLKALS (230 aa)). Phosphotyrosine is present on residues Tyr215 and Tyr216. Residues 251-258 (ELFKNAMR), Asp290, 309-310 (ST), and 325-330 (GFGYGL) contribute to the ATP site. The residue at position 376 (Lys376) is an N6-succinyllysine.

The protein belongs to the PDK/BCKDK protein kinase family. As to quaternary structure, homodimer, and heterodimer with PDK1. Interacts with the pyruvate dehydrogenase complex subunit DLAT, and is part of the multimeric pyruvate dehydrogenase complex that contains multiple copies of pyruvate dehydrogenase (E1), dihydrolipoamide acetyltransferase (DLAT, E2) and lipoamide dehydrogenase (DLD, E3). Expressed in many tissues, with the highest level in heart and skeletal muscle, intermediate levels in brain, kidney, pancreas and liver, and low levels in placenta and lung.

Its subcellular location is the mitochondrion matrix. It carries out the reaction L-seryl-[pyruvate dehydrogenase E1 alpha subunit] + ATP = O-phospho-L-seryl-[pyruvate dehydrogenase E1 alpha subunit] + ADP + H(+). Activity is enhanced by binding to the pyruvate dehydrogenase subunit DLAT. Inhibited by ADP and pyruvate; these compounds interfere with DLAT binding and thereby inhibit kinase activity. Inhibited by dichloroacetate. Inhibited by AZD7545; this compound interferes with DLAT binding and thereby inhibits kinase activity. Its function is as follows. Kinase that plays a key role in the regulation of glucose and fatty acid metabolism and homeostasis via phosphorylation of the pyruvate dehydrogenase subunits PDHA1 and PDHA2. This inhibits pyruvate dehydrogenase activity, and thereby regulates metabolite flux through the tricarboxylic acid cycle, down-regulates aerobic respiration and inhibits the formation of acetyl-coenzyme A from pyruvate. Inhibition of pyruvate dehydrogenase decreases glucose utilization and increases fat metabolism. Mediates cellular responses to insulin. Plays an important role in maintaining normal blood glucose levels and in metabolic adaptation to nutrient availability. Via its regulation of pyruvate dehydrogenase activity, plays an important role in maintaining normal blood pH and in preventing the accumulation of ketone bodies under starvation. Plays a role in the regulation of cell proliferation and in resistance to apoptosis under oxidative stress. Plays a role in p53/TP53-mediated apoptosis. The polypeptide is [Pyruvate dehydrogenase (acetyl-transferring)] kinase isozyme 2, mitochondrial (PDK2) (Homo sapiens (Human)).